Consider the following 310-residue polypeptide: MSTATHPRPEGPVVETAAPMPPVAVCIVTGLSGAGKSTALKVFEDMGHFVVDGLPASLAPEMVDMMSRPSMSHFKGIALGMDLRQSNFLDEINEALSDLAAVNIRPMLLFMECDAQELIRRYATTRRPHPLEREGMGLEASLLSERNSLSPLREMADLVIDTSRFSIHDLRRAIQKRWSDSKSKLRAIRVNVISFGFKYGVPREADFVFDLRFLTNPYFVADLRPMCGKDKEVAQYVFEQPHAREFCVKLIDLLLFILPLMETEGRYRVTIAVGCTGGRHRSVAMAEEVTQALRQADYPVTLEHRHLELG.

ATP is bound at residue 30–37 (GLSGAGKS). 82-85 (DLRQ) is a binding site for GTP.

The protein belongs to the RapZ-like family.

Functionally, displays ATPase and GTPase activities. The protein is Nucleotide-binding protein Ddes_0972 of Desulfovibrio desulfuricans (strain ATCC 27774 / DSM 6949 / MB).